A 176-amino-acid chain; its full sequence is Inner membrane-spanning protein YciB (176 aa).

A run of 6 helical transmembrane segments spans residues 3-23 (FLFDLFPIILFFAAFKVWGIF), 24-44 (TATAVAIVATLAQVAWVAFRH), 49-69 (TMLWVSLGVIVVFGGATLVLH), 81-101 (LYWLFAIGLLAARYAFGNNLI), 121-141 (VAWALFFAVLGVANLYVVHNF), and 149-169 (FKLFGTTGAMVVFIILQSLWL).

It belongs to the YciB family.

The protein localises to the cell inner membrane. Plays a role in cell envelope biogenesis, maintenance of cell envelope integrity and membrane homeostasis. The polypeptide is Inner membrane-spanning protein YciB (Burkholderia lata (strain ATCC 17760 / DSM 23089 / LMG 22485 / NCIMB 9086 / R18194 / 383)).